The sequence spans 391 residues: Metallophosphoesterase 1 (391 aa).

A helical membrane pass occupies residues 25 to 45; sequence TVVIISVLLFCEYFIYHLVIF. Residues Asp72, Asp114, Asn152, His244, His298, and His300 each contribute to the a divalent metal cation site. A helical transmembrane segment spans residues 352 to 372; that stretch reads VLATYGAAAVFLVVLILAHLE.

This sequence belongs to the metallophosphoesterase superfamily. MPPE1 family. As to quaternary structure, interacts with GPI-anchor proteins (via the GPI portion). Interacts with TMED10. Mn(2+) serves as cofactor.

The protein resides in the endoplasmic reticulum-Golgi intermediate compartment membrane. Metallophosphoesterase that catalyzes the removal of a side-chain ethanolamine-phosphate (EtNP) from the second mannose of the GPI-anchor protein intermediate. Participates in the glycan remodeling steps of GPI-anchor maturation to allow an efficient transport of GPI-anchor proteins from the endoplasmic reticulum to the Golgi. The chain is Metallophosphoesterase 1 from Cricetulus griseus (Chinese hamster).